A 382-amino-acid polypeptide reads, in one-letter code: Dual-specificity RNA methyltransferase RlmN (382 aa).

E113 acts as the Proton acceptor in catalysis. Residues E119–D358 form the Radical SAM core domain. A disulfide bridge connects residues C126 and C363. [4Fe-4S] cluster is bound by residues C133, C137, and C140. S-adenosyl-L-methionine is bound by residues G187–E188, S219, S241–H243, and N320. Catalysis depends on C363, which acts as the S-methylcysteine intermediate.

The protein belongs to the radical SAM superfamily. RlmN family. Requires [4Fe-4S] cluster as cofactor.

The protein resides in the cytoplasm. It catalyses the reaction adenosine(2503) in 23S rRNA + 2 reduced [2Fe-2S]-[ferredoxin] + 2 S-adenosyl-L-methionine = 2-methyladenosine(2503) in 23S rRNA + 5'-deoxyadenosine + L-methionine + 2 oxidized [2Fe-2S]-[ferredoxin] + S-adenosyl-L-homocysteine. It carries out the reaction adenosine(37) in tRNA + 2 reduced [2Fe-2S]-[ferredoxin] + 2 S-adenosyl-L-methionine = 2-methyladenosine(37) in tRNA + 5'-deoxyadenosine + L-methionine + 2 oxidized [2Fe-2S]-[ferredoxin] + S-adenosyl-L-homocysteine. In terms of biological role, specifically methylates position 2 of adenine 2503 in 23S rRNA and position 2 of adenine 37 in tRNAs. m2A2503 modification seems to play a crucial role in the proofreading step occurring at the peptidyl transferase center and thus would serve to optimize ribosomal fidelity. The protein is Dual-specificity RNA methyltransferase RlmN of Wigglesworthia glossinidia brevipalpis.